We begin with the raw amino-acid sequence, 519 residues long: Cytochrome P450 monooxygenase AtmP (519 aa).

A helical transmembrane segment spans residues 21 to 41 (SMLLVVTLVILFLWFIIPSPV). Cysteine 457 serves as a coordination point for heme.

The protein belongs to the cytochrome P450 family. Heme is required as a cofactor.

Its subcellular location is the membrane. It participates in secondary metabolite biosynthesis. Functionally, cytochrome P450 monooxygenase; part of the ATM2 gene cluster that mediates the biosynthesis of aflatrem, a tremorgenic mycotoxin with acute neurotoxic effects. Synthesis of geranylgeranyl diphosphate (GGPP) by AtmG (a GGPP synthase) precedes condensation of GGPP with indole 3-glycerol phosphate, followed by epoxidation and cyclization by AtmM (a FAD-dependent monooxygenase) and AtmC (a prenyltransferase) to produce paspaline. AtmB is also essential for paspaline production, but its exact role has not been identified yet. AtmP, a cytochrome P450 monooxygenase, subsequently converts paspaline to 13-desoxypaxilline via PC-M6 by removal of the C-30 methyl group and oxidation at C-10. AtmQ, a cytochrome P450 monooxygenase, then catalyzes the oxidation of 13-desoxypaxilline, first at C-7 to produce paspalicine and then at C-13 to form paspalinine. Finally, AtmD prenylates paspalinine to form aflatrem. This Aspergillus flavus protein is Cytochrome P450 monooxygenase AtmP.